A 143-amino-acid chain; its full sequence is D-aminoacyl-tRNA deacylase (143 aa).

A Gly-cisPro motif, important for rejection of L-amino acids motif is present at residues 135 to 136; sequence GP.

It belongs to the DTD family. In terms of assembly, homodimer.

It localises to the cytoplasm. It carries out the reaction glycyl-tRNA(Ala) + H2O = tRNA(Ala) + glycine + H(+). The catalysed reaction is a D-aminoacyl-tRNA + H2O = a tRNA + a D-alpha-amino acid + H(+). In terms of biological role, an aminoacyl-tRNA editing enzyme that deacylates mischarged D-aminoacyl-tRNAs. Also deacylates mischarged glycyl-tRNA(Ala), protecting cells against glycine mischarging by AlaRS. Acts via tRNA-based rather than protein-based catalysis; rejects L-amino acids rather than detecting D-amino acids in the active site. By recycling D-aminoacyl-tRNA to D-amino acids and free tRNA molecules, this enzyme counteracts the toxicity associated with the formation of D-aminoacyl-tRNA entities in vivo and helps enforce protein L-homochirality. This chain is D-aminoacyl-tRNA deacylase, found in Nocardia farcinica (strain IFM 10152).